Here is a 743-residue protein sequence, read N- to C-terminus: Serine/threonine-protein kinase GD17699 (743 aa).

Residues asparagine 54 to glutamate 78 form a disordered region. 2 Doublecortin domains span residues leucine 154–asparagine 240 and arginine 309–phenylalanine 392. Residues tyrosine 473–threonine 731 enclose the Protein kinase domain. Residues isoleucine 479 to valine 487 and lysine 502 contribute to the ATP site. Aspartate 594 serves as the catalytic Proton acceptor.

This sequence belongs to the protein kinase superfamily. CAMK Ser/Thr protein kinase family. CaMK subfamily.

It carries out the reaction L-seryl-[protein] + ATP = O-phospho-L-seryl-[protein] + ADP + H(+). The catalysed reaction is L-threonyl-[protein] + ATP = O-phospho-L-threonyl-[protein] + ADP + H(+). This chain is Serine/threonine-protein kinase GD17699, found in Drosophila simulans (Fruit fly).